The primary structure comprises 77 residues: Conotoxin King-Kong 2 (77 aa).

The first 22 residues, 1 to 22 (MKLTCMMIVAVLFLTAWTFVTA), serve as a signal peptide directing secretion. Residues 23 to 49 (DDSGNGLENLFSKAHHEMKNPEASNLN) constitute a propeptide that is removed on maturation. Cystine bridges form between C52–C67, C59–C71, and C66–C76. C76 carries the cysteine amide modification.

This sequence belongs to the conotoxin O1 superfamily. Expressed by the venom duct.

The protein localises to the secreted. This Conus textile (Cloth-of-gold cone) protein is Conotoxin King-Kong 2.